The following is a 202-amino-acid chain: Securin (202 aa).

Residues 36–55 are disordered; the sequence is DGRSQVSTPHVGKMFDAPPA. Residues 61 to 64 carry the D-box motif; sequence RKAL. 2 consecutive short sequence motifs (TEK-box) follow at residues 71–73 and 94–96; these read TEK. The short motif at 163 to 173 is the SH3-binding element; that stretch reads PPSPLKMPPLL. Ser-165 is subject to Phosphoserine; by CDK1.

Belongs to the securin family. Interacts with RPS10 and DNAJA1. Interacts with the caspase-like ESPL1, and prevents its protease activity probably by covering its active site. Interacts with TP53 and blocks its activity probably by blocking its binding to DNA. Interacts with the Ku 70 kDa subunit of ds-DNA kinase. Interacts with PTTG1IP. Phosphorylated at Ser-165 by CDK1 during mitosis. In terms of processing, phosphorylated in vitro by ds-DNA kinase. Post-translationally, ubiquitinated through 'Lys-11' linkage of ubiquitin moieties by the anaphase promoting complex (APC) at the onset of anaphase, conducting to its degradation. 'Lys-11'-linked ubiquitination is mediated by the E2 ligase UBE2C/UBCH10.

The protein resides in the cytoplasm. The protein localises to the nucleus. Regulatory protein, which plays a central role in chromosome stability, in the p53/TP53 pathway, and DNA repair. Probably acts by blocking the action of key proteins. During the mitosis, it blocks Separase/ESPL1 function, preventing the proteolysis of the cohesin complex and the subsequent segregation of the chromosomes. At the onset of anaphase, it is ubiquitinated, conducting to its destruction and to the liberation of ESPL1. Its function is however not limited to a blocking activity, since it is required to activate ESPL1. Negatively regulates the transcriptional activity and related apoptosis activity of TP53. The negative regulation of TP53 may explain the strong transforming capability of the protein when it is overexpressed. May also play a role in DNA repair via its interaction with Ku, possibly by connecting DNA damage-response pathways with sister chromatid separation. The sequence is that of Securin (PTTG1) from Bos taurus (Bovine).